Consider the following 320-residue polypeptide: Short-chain dehydrogenase/reductase ATR7 (320 aa).

Positions 32, 34, 55, 70, 93, 134, 167, 171, and 202 each coordinate NADP(+). The active-site Proton acceptor is tyrosine 167. Lysine 171 (lowers pKa of active site Tyr) is an active-site residue.

It belongs to the short-chain dehydrogenases/reductases (SDR) family.

Its pathway is mycotoxin biosynthesis. Its function is as follows. Short-chain dehydrogenase/reductase; part of the core atranone cluster (CAC) which products are predicted to catalyze most or all steps of mycotoxin atranone synthesis, starting from geranylgeranyl pyrophosphate (GGPP). The initial cyclization of GGPP to dolabellane is probably performed by the terpene cyclase ATR13. The Baeyer-Villiger oxidation near the end of the atranone synthesis, which converts atranones D and E to atranones F and G is predicted to be catalyzed by the monooxygenase ATR8. Of the CAC's other predicted gene products, the reducing PKS ATR6 might synthesize a polyketide chain. This polyketide is probably transferred onto the atranone backbone by the polyketide transferase ATR5. Other predicted CAC products include 4 oxygenases (ATR2, ATR3, ATR4, and ATR14), 3 short-chain reductases (ATR7, ATR9, and ATR10), and a methyltransferase (ATR12). These may all be involved in the various steps of atranone biosynthesis, although their specific roles must await experimental determination. The protein is Short-chain dehydrogenase/reductase ATR7 of Stachybotrys chlorohalonatus (strain IBT 40285).